A 337-amino-acid polypeptide reads, in one-letter code: PHD finger protein 11 (337 aa).

The C2HC pre-PHD-type zinc finger occupies Lys25–Leu61. The PHD-type zinc finger occupies Leu91–Ser143. Disordered stretches follow at residues Glu145 to Thr196 and Gly301 to Leu337. Over residues His187–Thr196 the composition is skewed to basic and acidic residues. Polar residues-rich tracts occupy residues Gly301–Ser312 and Ser323–Leu337.

As to quaternary structure, interacts with BRCA1 and RELA.

The protein resides in the nucleus. Functionally, positive regulator of Th1-type cytokine gene expression. The protein is PHD finger protein 11 (Phf11) of Mus musculus (Mouse).